We begin with the raw amino-acid sequence, 842 residues long: Homeobox-leucine zipper protein REVOLUTA (842 aa).

A disordered region spans residues 1–20; sequence MEMAVANHRERSSDSMNRHL. Over residues 7 to 20 the composition is skewed to basic and acidic residues; that stretch reads NHRERSSDSMNRHL. The segment at residues 22–85 is a DNA-binding region (homeobox); sequence SSGKYVRYTA…NRRCRDKQRK (64 aa). Residues 90-121 adopt a coiled-coil conformation; that stretch reads LQSVNRKLSAMNKLLMEENDRLQKQVSQLVCE. Positions 151–379 constitute an START domain; sequence DANSPAGLLS…LAQESNGEVV (229 aa).

Belongs to the HD-ZIP homeobox family. Class III subfamily. Homodimer. Heterodimer with ZPR1, ZPR2, ZPR3 or ZPR4. Interacts with ESR1 and ESR2. Interacts with ZPR1, ZPR2, ZPR3 and ZPR4. Heterodimerization with ZPR3 prevents DNA binding by REV. As to expression, expressed in the interfascicular regions of stem and vascular bundles of young roots and leaves.

It localises to the nucleus. Probable transcription factor involved in the regulation of interfascicular fiber (cortical cells) and secondary xylem differentiation in the inflorescence stems. Required for lateral shoot meristems (LSMs) and flower meristems (FMs) initiation. May be involved in the determination of vascular patterning and organ polarity. Directly regulates the expression of AGO10, ZPR1, ZPR2, ZPR3 and ZPR4. Required to regulate adaxial-abaxial polarity and leaf axial patterning. The polypeptide is Homeobox-leucine zipper protein REVOLUTA (Arabidopsis thaliana (Mouse-ear cress)).